Here is a 1090-residue protein sequence, read N- to C-terminus: Neurofilament heavy polypeptide (1090 aa).

The tract at residues 2-98 (MSFGSADALL…AVAARSEKEQ (97 aa)) is head. A phosphoserine mark is found at Ser74 and Ser122. Positions 95–411 (EKEQLQALND…KLLEGEECRI (317 aa)) constitute an IF rod domain. The coil 1A stretch occupies residues 99–130 (LQALNDRFAGYIDKVRQLEAHNRSLEGEAAAL). Positions 131–143 (RQQQAGRAAMGEL) are linker 1. Residues 144–242 (YEREVREMRG…QEEVGELLGQ (99 aa)) are coil 1B. A linker 12 region spans residues 243 to 264 (IQGCGAAQAQAQAEARDALKCD). Residues 265-286 (VTSALREIRAQLEGHAVQSTLQ) form a coil 2A region. Residues 287–290 (SEEW) form a linker 2 region. A coil 2B region spans residues 291–411 (FRVRLDRLSE…KLLEGEECRI (121 aa)). Residues Ser345, Ser416, and Ser419 each carry the phosphoserine modification. The tail stretch occupies residues 412–1090 (GFGPSPFSLT…TEDKATKGEK (679 aa)). Positions 456–1090 (EGQTEEIRVT…TEDKATKGEK (635 aa)) are disordered. Residues 468 to 495 (VTEEEDKEAQGQEGEEAEEGEEKEEEEG) are compositionally biased toward acidic residues. The segment covering 496-506 (AAATSPPAEEA) has biased composition (low complexity). A phosphoserine mark is found at Ser508, Ser523, Ser529, Ser535, Ser541, Ser547, Ser553, Ser559, Ser565, Ser571, Ser577, Ser583, Ser589, Ser595, Ser601, Ser607, Ser613, Ser619, Ser625, Ser631, Ser637, Ser643, Ser649, Ser655, Ser661, Ser667, Ser673, Ser679, Ser685, Ser691, Ser697, Ser703, Ser709, Ser715, Ser721, Ser727, Ser733, Ser739, Ser745, Ser751, Ser757, Ser763, and Ser769. The span at 508–579 (SPEKETKSRV…KSPAEAKSPA (72 aa)) shows a compositional bias: basic and acidic residues. Repeat copies occupy residues 522-527 (KSPGEA), 528-533 (KSPGEA), 534-539 (KSPAEA), 540-545 (KSPGEA), 546-551 (KSPGEA), 552-557 (KSPGEA), 558-563 (KSPAEP), 564-569 (KSPAEP), 570-575 (KSPAEA), 576-581 (KSPAEP), 582-587 (KSPATV), 588-593 (KSPGEA), 594-599 (KSPSEA), 600-605 (KSPAEA), 606-611 (KSPAEA), 612-617 (KSPAEA), 618-623 (KSPAEA), 624-629 (KSPAEA), 630-635 (KSPAEA), 636-641 (KSPATV), 642-647 (KSPGEA), 648-653 (KSPSEA), 654-659 (KSPAEA), 660-665 (KSPAEA), 666-671 (KSPAEA), 672-677 (KSPAEV), 678-683 (KSPGEA), 684-689 (KSPAEP), 690-695 (KSPAEA), 696-701 (KSPAEV), 702-707 (KSPAEA), 708-713 (KSPAEV), 714-719 (KSPGEA), 720-725 (KSPAAV), 726-731 (KSPAEA), 732-737 (KSPAAV), 738-743 (KSPGEA), 744-749 (KSPGEA), 750-755 (KSPAEA), 756-761 (KSPAEA), 762-767 (KSPIEV), and 768-773 (KSPEKA). The 52 X 6 AA approximate tandem repeats of K-S-P-[AGISV]-[EATK]-[APVQ] stretch occupies residues 522–892 (KSPGEAKSPG…KEEVKSPVKE (371 aa)). Positions 595 to 633 (SPSEAKSPAEAKSPAEAKSPAEAKSPAEAKSPAEAKSPA) are enriched in basic and acidic residues. Basic and acidic residues predominate over residues 649–717 (SPSEAKSPAE…KSPAEVKSPG (69 aa)). The segment covering 745–781 (SPGEAKSPAEAKSPAEAKSPIEVKSPEKAKTPVKEGA) has biased composition (basic and acidic residues). Residues 774 to 779 (KTPVKE) form a 43; approximate repeat. A run of 6 repeats spans residues 782–787 (KSPAEA), 788–793 (KSPEKA), 794–799 (KSPVKE), 808–813 (KSPEKA), 814–819 (KSPVKE), and 833–838 (KSPEAQ). Phosphoserine occurs at positions 783, 789, 795, 809, 815, and 834. The segment covering 788–834 (KSPEKAKSPVKEDIKPPAEAKSPEKAKSPVKEGAKPPEKAKPLDVKS) has biased composition (basic and acidic residues). Thr839 is modified (phosphothreonine). 2 stretches are compositionally biased toward basic and acidic residues: residues 843 to 964 (EEAK…KAVA) and 974 to 1090 (GVKE…KGEK). 3 repeat units span residues 858-863 (KSPAKE), 866-871 (KSPEKE), and 887-892 (KSPVKE). A phosphoserine mark is found at Ser859, Ser867, Ser888, and Ser947.

Belongs to the intermediate filament family. Forms heterodimers with NEFL; which can further hetero-oligomerize (in vitro). Forms heterodimers with INA (in vitro). There are a number of repeats of the tripeptide K-S-P, NFH is phosphorylated on a number of the serines in this motif. It is thought that phosphorylation of NFH results in the formation of interfilament cross bridges that are important in the maintenance of axonal caliber. In terms of processing, phosphorylation seems to play a major role in the functioning of the larger neurofilament polypeptides (NF-M and NF-H), the levels of phosphorylation being altered developmentally and coincidentally with a change in the neurofilament function. Post-translationally, phosphorylated in the head and rod regions by the PKC kinase PKN1, leading to the inhibition of polymerization. As to expression, expressed in the sciatic nerve (at protein level).

The protein resides in the cytoplasm. It is found in the cytoskeleton. Its subcellular location is the cell projection. It localises to the axon. Neurofilaments usually contain three intermediate filament proteins: NEFL, NEFM, and NEFH which are involved in the maintenance of neuronal caliber. NEFH has an important function in mature axons that is not subserved by the two smaller NF proteins. May additionally cooperate with the neuronal intermediate filament proteins PRPH and INA to form neuronal filamentous networks. The sequence is that of Neurofilament heavy polypeptide (Nefh) from Mus musculus (Mouse).